A 133-amino-acid polypeptide reads, in one-letter code: Oocytes ribonuclease (133 aa).

Positions 1 to 22 (MCAKSLLLVFGILLGLSHLSLS) are cleaved as a signal peptide. At glutamine 23 the chain carries Pyrrolidone carboxylic acid. The active-site Proton acceptor is histidine 32. Cystine bridges form between cysteine 41/cysteine 93, cysteine 56/cysteine 103, cysteine 74/cysteine 118, and cysteine 115/cysteine 132. Position 57-61 (57-61 (KRVNT)) interacts with substrate. The active-site Proton donor is histidine 125.

This sequence belongs to the pancreatic ribonuclease family. Monomer.

The protein resides in the secreted. Preferentially cleaves single-stranded RNA at pyrimidine residues with a 3'flanking guanine. Hydrolyzes poly(U) and poly(C) as substrates, and prefers the former. The S-lectins in frog eggs may be involved in the fertilization and development of the frog embryo. This lectin agglutinates various animal cells, including normal lymphocytes, erythrocytes, and fibroblasts of animal and human origin. It is cytotoxic against several tumor cells. This is Oocytes ribonuclease (RCR) from Aquarana catesbeiana (American bullfrog).